A 419-amino-acid polypeptide reads, in one-letter code: uncharacterized protein (419 aa).

12 helical membrane passes run 15-35 (RVLM…MPYL), 36-56 (ADYL…VMGV), 77-99 (YKPL…VVAQ), 104-126 (VLIA…RGYL), 140-160 (MFNV…LVLL), 166-186 (ITVL…LVAL), 213-233 (FLTL…IYLA), 246-266 (QYLL…GGQL), 282-302 (LVVG…IPNG), 309-329 (VAVM…AALF), 351-371 (FYST…GSLM), and 377-397 (LNTD…AVAG).

This sequence belongs to the major facilitator superfamily.

It is found in the cell membrane. This is an uncharacterized protein from Mycobacterium tuberculosis (strain CDC 1551 / Oshkosh).